The chain runs to 171 residues: Large ribosomal subunit protein bL9 (171 aa).

This sequence belongs to the bacterial ribosomal protein bL9 family.

In terms of biological role, binds to the 23S rRNA. This chain is Large ribosomal subunit protein bL9, found in Rickettsia rickettsii (strain Iowa).